The sequence spans 201 residues: Recombination protein RecR (201 aa).

The segment at 60–75 (CSCCGNVDTSDPCTIC) adopts a C4-type zinc-finger fold. The Toprim domain maps to 83–178 (TTLIVVEDVS…RVTRLAHGVP (96 aa)).

It belongs to the RecR family.

Functionally, may play a role in DNA repair. It seems to be involved in an RecBC-independent recombinational process of DNA repair. It may act with RecF and RecO. This chain is Recombination protein RecR, found in Brucella anthropi (strain ATCC 49188 / DSM 6882 / CCUG 24695 / JCM 21032 / LMG 3331 / NBRC 15819 / NCTC 12168 / Alc 37) (Ochrobactrum anthropi).